Consider the following 348-residue polypeptide: Zinc-type alcohol dehydrogenase-like protein C2E1P3.01 (348 aa).

This sequence belongs to the zinc-containing alcohol dehydrogenase family. Quinone oxidoreductase subfamily.

Its subcellular location is the mitochondrion. This chain is Zinc-type alcohol dehydrogenase-like protein C2E1P3.01, found in Schizosaccharomyces pombe (strain 972 / ATCC 24843) (Fission yeast).